Consider the following 185-residue polypeptide: TATA-box-binding protein 3 (185 aa).

Repeat copies occupy residues 7 to 84 (IENV…ANKL) and 100 to 178 (VQNI…RKEF).

Belongs to the TBP family.

Its function is as follows. General factor that plays a role in the activation of archaeal genes transcribed by RNA polymerase. Binds specifically to the TATA box promoter element which lies close to the position of transcription initiation. The chain is TATA-box-binding protein 3 from Methanosarcina acetivorans (strain ATCC 35395 / DSM 2834 / JCM 12185 / C2A).